A 217-amino-acid polypeptide reads, in one-letter code: NADPH-dependent 3-demethoxyubiquinone 3-hydroxylase, mitochondrial (217 aa).

2 tandem repeats follow at residues 48 to 129 and 130 to 217. Positions 48–217 are 2 X approximate tandem repeats; it reads AVDQIIRVDH…SAAIYLSERF (170 aa). 6 residues coordinate Fe cation: E60, E90, H93, E142, E178, and H181. 2 residues coordinate NADH: Y212 and R216.

Belongs to the COQ7 family. In terms of assembly, component of a multi-subunit COQ enzyme complex. Interacts with COQ8B and COQ6. Interacts with COQ9. The cofactor is Fe cation.

It is found in the mitochondrion inner membrane. It carries out the reaction a 5-methoxy-2-methyl-3-(all-trans-polyprenyl)benzoquinone + NADH + O2 = a 3-demethylubiquinone + NAD(+) + H2O. It functions in the pathway cofactor biosynthesis; ubiquinone biosynthesis. Catalyzes the hydroxylation of the 5-methoxy-2-methyl-3-(all-trans-polyprenyl)benzoquinone at the C6 position and participates in the biosynthesis of ubiquinone. Catalyzes the reaction through a substrate-mediated reduction pathway, whereby NADH shuttles electrons to 5-methoxy-2-methyl-3-(all-trans-decaprenyl)benzoquinone, which then transfers the electrons to the two Fe(3+) centers. The binding of 5-methoxy-2-methyl-3-(all-trans-polyprenyl)benzoquinone (DMQn) mediates reduction of the diiron center by nicotinamide adenine dinucleotide (NADH) and initiates oxygen activation for subsequent DMQ hydroxylation. The physiological substrates are 5-methoxy-2-methyl-3-(all-trans-nonaprenyl)benzoquinone (DMQ(9)) and 5-methoxy-2-methyl-3-(all-trans-decaprenyl)benzoquinone (DMQ(10)), however in vitro the enzyme does not have any specificity concerning the length of the polyprenyl tail, and accepts tails of various lengths with similar efficiency. Also has a structural role in the COQ enzyme complex, stabilizing other COQ polypeptides. Involved in lifespan determination in a ubiquinone-independent manner. Plays a role in modulating mitochondrial stress responses, acting in the nucleus, perhaps via regulating gene expression, independent of its characterized mitochondrial function in ubiquinone biosynthesis. This Rattus norvegicus (Rat) protein is NADPH-dependent 3-demethoxyubiquinone 3-hydroxylase, mitochondrial.